We begin with the raw amino-acid sequence, 423 residues long: Glutamyl-tRNA reductase (423 aa).

Residues 49–52, Ser-106, 111–113, and Gln-117 contribute to the substrate site; these read TCNR and EPQ. Cys-50 functions as the Nucleophile in the catalytic mechanism. 186–191 contacts NADP(+); that stretch reads GAGDTS.

This sequence belongs to the glutamyl-tRNA reductase family. Homodimer.

It carries out the reaction (S)-4-amino-5-oxopentanoate + tRNA(Glu) + NADP(+) = L-glutamyl-tRNA(Glu) + NADPH + H(+). The protein operates within porphyrin-containing compound metabolism; protoporphyrin-IX biosynthesis; 5-aminolevulinate from L-glutamyl-tRNA(Glu): step 1/2. Catalyzes the NADPH-dependent reduction of glutamyl-tRNA(Glu) to glutamate 1-semialdehyde (GSA). The polypeptide is Glutamyl-tRNA reductase (Idiomarina loihiensis (strain ATCC BAA-735 / DSM 15497 / L2-TR)).